Reading from the N-terminus, the 201-residue chain is MQSSPLLENLMEALRVLPGVGPKSAQRMAYHLLQRNRSGGVNLAKALSEAMTHIGHCKSCRTFTEEDECAICQNYRRQISGQLCVVEMPADIQAIEQTGQFSGRYFVLMGHLSPLDGIGPREIGLDLLQKRLEEESFQEVILATNPTIEGDATANYIAEMCSIHNIKVTRIAHGIPVGSELEMVDGTSLSHSFVGRRDISL.

The segment at 57–72 (CKSCRTFTEEDECAIC) adopts a C4-type zinc-finger fold. Residues 81–176 (GQLCVVEMPA…KVTRIAHGIP (96 aa)) enclose the Toprim domain.

This sequence belongs to the RecR family.

Its function is as follows. May play a role in DNA repair. It seems to be involved in an RecBC-independent recombinational process of DNA repair. It may act with RecF and RecO. The chain is Recombination protein RecR from Glaesserella parasuis serovar 5 (strain SH0165) (Haemophilus parasuis).